The sequence spans 550 residues: MAFSKLLEQAGGVGLFQTLQVLTFILPCLMIPSQMLLENFSAAIPGHRCWTHMLDNGSAVSTNMTPKALLTISIPPGPNQGPHQCRRFRQPQWQLLDPNATATSWSEADTEPCVDGWVYDRSVFTSTIVAKWDLVCSSQGLKPLSQSIFMSGILVGSFIWGLLSYRFGRKPMLSWCCLQLAVAGTSTIFAPTFVIYCGLRFVAAFGMAGIFLSSLTLMVEWTTTSRRAVTMTVVGCAFSAGQAALGGLAFALRDWRTLQLAASVPFFAISLISWWLPESARWLIIKGKPDQALQELRKVARINGHKEAKNLTIEVLMSSVKEEVASAKEPRSVLDLFCVPVLRWRSCAMLVVNFSLLISYYGLVFDLQSLGRDIFLLQALFGAVDFLGRATTALLLSFLGRRTIQAGSQAMAGLAILANMLVPQDLQTLRVVFAVLGKGCFGISLTCLTIYKAELFPTPVRMTADGILHTVGRLGAMMGPLILMSRQALPLLPPLLYGVISIASSLVVLFFLPETQGLPLPDTIQDLESQKSTAAQGNRQEAVTVESTSL.

The Cytoplasmic segment spans residues 1–10; it reads MAFSKLLEQA. The chain crosses the membrane as a helical span at residues 11 to 31; that stretch reads GGVGLFQTLQVLTFILPCLMI. The Extracellular segment spans residues 32–142; that stretch reads PSQMLLENFS…DLVCSSQGLK (111 aa). N-linked (GlcNAc...) asparagine glycans are attached at residues Asn-39, Asn-56, and Asn-99. The helical transmembrane segment at 143 to 163 threads the bilayer; the sequence is PLSQSIFMSGILVGSFIWGLL. Residues 164–174 are Cytoplasmic-facing; that stretch reads SYRFGRKPMLS. The chain crosses the membrane as a helical span at residues 175–195; it reads WCCLQLAVAGTSTIFAPTFVI. The Extracellular portion of the chain corresponds to 196–200; sequence YCGLR. The helical transmembrane segment at 201 to 221 threads the bilayer; that stretch reads FVAAFGMAGIFLSSLTLMVEW. Topologically, residues 222 to 231 are cytoplasmic; that stretch reads TTTSRRAVTM. A helical transmembrane segment spans residues 232 to 252; the sequence is TVVGCAFSAGQAALGGLAFAL. The Extracellular segment spans residues 253–256; it reads RDWR. Residues 257–277 traverse the membrane as a helical segment; sequence TLQLAASVPFFAISLISWWLP. The Cytoplasmic segment spans residues 278-346; it reads ESARWLIIKG…FCVPVLRWRS (69 aa). A helical transmembrane segment spans residues 347-367; that stretch reads CAMLVVNFSLLISYYGLVFDL. Topologically, residues 368 to 378 are extracellular; the sequence is QSLGRDIFLLQ. A helical membrane pass occupies residues 379-399; the sequence is ALFGAVDFLGRATTALLLSFL. Residues 400-402 are Cytoplasmic-facing; the sequence is GRR. A helical membrane pass occupies residues 403–423; it reads TIQAGSQAMAGLAILANMLVP. At 424-430 the chain is on the extracellular side; it reads QDLQTLR. The helical transmembrane segment at 431-451 threads the bilayer; it reads VVFAVLGKGCFGISLTCLTIY. Over 452 to 463 the chain is Cytoplasmic; that stretch reads KAELFPTPVRMT. Residues 464–484 traverse the membrane as a helical segment; it reads ADGILHTVGRLGAMMGPLILM. Residues 485–490 are Extracellular-facing; that stretch reads SRQALP. The helical transmembrane segment at 491–511 threads the bilayer; the sequence is LLPPLLYGVISIASSLVVLFF. At 512-550 the chain is on the cytoplasmic side; the sequence is LPETQGLPLPDTIQDLESQKSTAAQGNRQEAVTVESTSL. A disordered region spans residues 531–550; sequence KSTAAQGNRQEAVTVESTSL.

Belongs to the major facilitator (TC 2.A.1) superfamily. Organic cation transporter (TC 2.A.1.19) family. In terms of processing, N-glycosylated. Contains several complex-type N-glycans. In terms of tissue distribution, expressed in placental trophoblasts, syncytiotrophoblast and cytotrophoblast. Also located in the proximal tubules in kidneys.

It is found in the cell membrane. It localises to the apical cell membrane. The protein localises to the basal cell membrane. The enzyme catalyses estrone 3-sulfate(out) + glutarate(in) = estrone 3-sulfate(in) + glutarate(out). It carries out the reaction dehydroepiandrosterone 3-sulfate(out) = dehydroepiandrosterone 3-sulfate(in). The catalysed reaction is prostaglandin F2alpha(out) = prostaglandin F2alpha(in). It catalyses the reaction prostaglandin E2(out) = prostaglandin E2(in). In terms of biological role, antiporter that mediates the transport of conjugated steroids and other specific organic anions at the basal membrane of syncytiotrophoblast and at the apical membrane of proximal tubule epithelial cells, in exchange for anionic compounds. May be responsible for placental absorption of fetal-derived steroid sulfates such as estrone sulfate (E1S) and the steroid hormone precursor dehydroepiandrosterone sulfate (DHEA-S), as well as clearing waste products and xenobiotics from the fetus. Maybe also be involved in placental urate homeostasis. Facilitates the renal reabsorption of organic anions such as urate and derived steroid sulfates. Organic anion glutarate acts as conteranion for E1S renal uptake. Possible transport mode may also include DHEA-S/E1S exchange. Also interacts with inorganic anions such as chloride and hydroxyl ions, therefore possible transport modes may include E1S/Cl(-), E1S/OH(-), urate/Cl(-) and urate/OH(-). Also mediates the transport of prostaglandin E2 (PGE2) and prostaglandin F2-alpha (PGF2-alpha) and may be involved in their renal excretion. Also able to uptake anionic drugs, diuretics, bile salts and ochratoxin A. Mediates the unidirectional efflux of glutamate and aspartate. Glutamate efflux down its transmembrane gradient may drive SLC22A11/OAT4-mediated placental uptake of E1S. This is Solute carrier family 22 member 11 from Homo sapiens (Human).